Reading from the N-terminus, the 371-residue chain is tRNA-specific 2-thiouridylase MnmA (371 aa).

ATP contacts are provided by residues Gly-8–Ser-15 and Met-34. The interval Asn-94–Asp-96 is interaction with target base in tRNA. The active-site Nucleophile is the Cys-99. Cys-99 and Cys-195 are oxidised to a cystine. ATP is bound at residue Gly-123. The interaction with tRNA stretch occupies residues Lys-145–Gln-147. The active-site Cysteine persulfide intermediate is the Cys-195. The interval Arg-309–Tyr-310 is interaction with tRNA.

The protein belongs to the MnmA/TRMU family.

The protein localises to the cytoplasm. It catalyses the reaction S-sulfanyl-L-cysteinyl-[protein] + uridine(34) in tRNA + AH2 + ATP = 2-thiouridine(34) in tRNA + L-cysteinyl-[protein] + A + AMP + diphosphate + H(+). Catalyzes the 2-thiolation of uridine at the wobble position (U34) of tRNA, leading to the formation of s(2)U34. This Methylococcus capsulatus (strain ATCC 33009 / NCIMB 11132 / Bath) protein is tRNA-specific 2-thiouridylase MnmA.